A 623-amino-acid polypeptide reads, in one-letter code: Calnexin (623 aa).

An N-terminal signal peptide occupies residues 1–21; that stretch reads MLNRKWSFVFLTFLLVISVNA. D108 is a binding site for Ca(2+). C151 and C185 form a disulfide bridge. Residues Y155, K157, Y176, and D183 each coordinate an alpha-D-glucoside. N202 carries N-linked (GlcNAc...) asparagine glycosylation. The interval 260-337 is disordered; it reads SLTPPKEIFD…QKPQDWDEDM (78 aa). Positions 266 to 276 are enriched in basic and acidic residues; the sequence is EIFDETDLKPE. A p domain (Extended arm) region spans residues 267 to 400; it reads IFDETDLKPE…RLIDNPNYFE (134 aa). A run of 5 repeats spans residues 269–281, 286–298, 305–317, 324–336, and 339–349. 4 X approximate repeats stretches follow at residues 269–336 and 339–396; these read DETD…WDED and GSWE…IDNP. 2 stretches are compositionally biased toward acidic residues: residues 277-287 and 314-323; these read DWDEREQIEDE and WNEEENELIP. C351 and C357 are disulfide-bonded. A run of 3 repeats spans residues 358-368, 372-382, and 386-396. E416 serves as a coordination point for an alpha-D-glucoside. Residue D427 coordinates Ca(2+). The chain crosses the membrane as a helical span at residues 480–500; that stretch reads LWAVYILCILLPLIAIGVFCF. The tract at residues 536 to 623 is disordered; sequence IAEDEEDNQP…AKRRTARRGD (88 aa). Positions 556-565 are enriched in acidic residues; sequence IDEDEQDEVE. Positions 566–581 are enriched in low complexity; that stretch reads QQPSSSKTASSESSSA. Over residues 614–623 the composition is skewed to basic residues; the sequence is AKRRTARRGD.

The protein belongs to the calreticulin family. Glycosylation is important for its biological activity.

The protein resides in the endoplasmic reticulum membrane. It is found in the cytoplasm. The protein localises to the perinuclear region. Its subcellular location is the cytoplasmic vesicle. Its function is as follows. Calcium-binding protein that interacts with newly synthesized monoglucosylated glycoproteins in the endoplasmic reticulum. It may act in assisting protein assembly and/or in the retention within the ER of unassembled protein subunits. It seems to play a major role in the quality control apparatus of the ER by the retention of incorrectly folded proteins. Required for embryogenesis and larval development under heat and ER stress conditions. May be important for germ cell development. Involved in neuronal necrotic cell death. This Caenorhabditis briggsae protein is Calnexin.